The following is a 275-amino-acid chain: Membrane protein insertase MisCB (275 aa).

Positions Met1–Leu18 are cleaved as a signal peptide. Cys19 is lipidated: N-palmitoyl cysteine. Cys19 carries the S-diacylglycerol cysteine lipid modification. A run of 5 helical transmembrane segments spans residues Tyr63 to Val83, Ala139 to Ile159, Trp172 to Val192, Leu219 to Leu239, and Pro240 to Thr260.

This sequence belongs to the OXA1/ALB3/YidC family. Type 2 subfamily. In terms of assembly, mostly monomeric, it may also form dimers. Interacts with SpoIIIAE. Forms a complex with the F(1)F(0) ATP synthase in which can be found the alpha, beta, gamma, delta and epsilon subunits of F(1) and a, b and subunits of F(0). YqgA is found in the same complex.

It localises to the cell membrane. In terms of biological role, required for the insertion and/or proper folding and/or complex formation of integral membrane proteins into the membrane. Involved in integration of membrane proteins that insert both dependently and independently of the Sec translocase complex, as well as at least some lipoproteins. Also involved in protein secretion processes. It has an overlapping, although partly distinct, function compared to SpoIIIJ(MisCB). In Bacillus subtilis (strain 168), this protein is Membrane protein insertase MisCB (misCB).